We begin with the raw amino-acid sequence, 490 residues long: GTPase Der (490 aa).

EngA-type G domains lie at 3–166 (PVVA…MEDL) and 203–376 (IKLA…DSST). GTP-binding positions include 9-16 (GRPNVGKS), 56-60 (DTGGI), 118-121 (NKID), 209-216 (GRPNVGKS), 256-260 (DTAGV), and 321-324 (NKWD). One can recognise a KH-like domain in the interval 377–461 (RRVGTSMLTR…PIRIQFKEGE (85 aa)).

This sequence belongs to the TRAFAC class TrmE-Era-EngA-EngB-Septin-like GTPase superfamily. EngA (Der) GTPase family. In terms of assembly, associates with the 50S ribosomal subunit.

Functionally, GTPase that plays an essential role in the late steps of ribosome biogenesis. This is GTPase Der from Shigella boydii serotype 18 (strain CDC 3083-94 / BS512).